We begin with the raw amino-acid sequence, 345 residues long: uncharacterized protein (345 aa).

It localises to the cell membrane. Functionally, involved in potassium and divalent cation transport. Enhances the transport activity of the cation/potassium transporter CzcD. This is an uncharacterized protein from Bacillus subtilis (strain 168).